The chain runs to 86 residues: Large ribosomal subunit protein uL23 (86 aa).

This sequence belongs to the universal ribosomal protein uL23 family. As to quaternary structure, part of the 50S ribosomal subunit. Contacts protein L29.

Its function is as follows. Binds to 23S rRNA. One of the proteins that surrounds the polypeptide exit tunnel on the outside of the ribosome. The chain is Large ribosomal subunit protein uL23 from Thermococcus kodakarensis (strain ATCC BAA-918 / JCM 12380 / KOD1) (Pyrococcus kodakaraensis (strain KOD1)).